A 94-amino-acid polypeptide reads, in one-letter code: Phosphoribosyl-ATP pyrophosphatase (94 aa).

The protein belongs to the PRA-PH family.

Its subcellular location is the cytoplasm. The enzyme catalyses 1-(5-phospho-beta-D-ribosyl)-ATP + H2O = 1-(5-phospho-beta-D-ribosyl)-5'-AMP + diphosphate + H(+). It participates in amino-acid biosynthesis; L-histidine biosynthesis; L-histidine from 5-phospho-alpha-D-ribose 1-diphosphate: step 2/9. This Saccharolobus solfataricus (strain ATCC 35092 / DSM 1617 / JCM 11322 / P2) (Sulfolobus solfataricus) protein is Phosphoribosyl-ATP pyrophosphatase (hisE).